Reading from the N-terminus, the 92-residue chain is Small ribosomal subunit protein uS19c (92 aa).

Belongs to the universal ribosomal protein uS19 family.

The protein localises to the plastid. The protein resides in the chloroplast. Protein S19 forms a complex with S13 that binds strongly to the 16S ribosomal RNA. This is Small ribosomal subunit protein uS19c from Thalassiosira pseudonana (Marine diatom).